Reading from the N-terminus, the 141-residue chain is MTCVLKGCVNEVTVLGHETCSIGHANKLRKQVADMVGVTRRCAENNCGWFVCIIINDFTFDVYNCCGRSHLEKCRKRVEARNREIWKQIRRIQAESSSATRKKSHNSKNSKKKFKEDREFGAPKRFLRDDVPLGIDQLFVF.

The disordered stretch occupies residues 95–116 (ESSSATRKKSHNSKNSKKKFKE). The segment covering 100 to 113 (TRKKSHNSKNSKKK) has biased composition (basic residues).

In Tobacco rattle virus (strain PSG), this protein is 16 kDa protein.